A 1295-amino-acid chain; its full sequence is Phosphoribosylformylglycinamidine synthase (1295 aa).

Positions 305–327 (WPGAATGSGGEIRDEGATGRGAK) are disordered. ATP contacts are provided by residues 307 to 318 (GAATGSGGEIRD), 386 to 388 (TGY), and Ala678. 4 residues coordinate Mg(2+): Asp679, Glu718, Asn722, and Asp884. Residue Ser886 participates in ATP binding. The 254-residue stretch at 1042–1295 (VAVLREQGVN…IFRNARKQLG (254 aa)) folds into the Glutamine amidotransferase type-1 domain. The Nucleophile role is filled by Cys1135. Catalysis depends on residues His1260 and Glu1262.

It in the N-terminal section; belongs to the FGAMS family. In terms of assembly, monomer.

The protein localises to the cytoplasm. The enzyme catalyses N(2)-formyl-N(1)-(5-phospho-beta-D-ribosyl)glycinamide + L-glutamine + ATP + H2O = 2-formamido-N(1)-(5-O-phospho-beta-D-ribosyl)acetamidine + L-glutamate + ADP + phosphate + H(+). It participates in purine metabolism; IMP biosynthesis via de novo pathway; 5-amino-1-(5-phospho-D-ribosyl)imidazole from N(2)-formyl-N(1)-(5-phospho-D-ribosyl)glycinamide: step 1/2. Its function is as follows. Phosphoribosylformylglycinamidine synthase involved in the purines biosynthetic pathway. Catalyzes the ATP-dependent conversion of formylglycinamide ribonucleotide (FGAR) and glutamine to yield formylglycinamidine ribonucleotide (FGAM) and glutamate. The polypeptide is Phosphoribosylformylglycinamidine synthase (Salmonella typhimurium (strain LT2 / SGSC1412 / ATCC 700720)).